Reading from the N-terminus, the 329-residue chain is NADH-quinone oxidoreductase subunit H (329 aa).

Helical transmembrane passes span 9-29 (LIKILILVAVFSALGGFATYI), 42-62 (GPCYVGPFGLLQVAADGIKLF), 75-95 (FIFTLAPIIAMVSAFVSMAPI), 117-137 (IGFLFFLAVGSAGIYAPILAG), 154-174 (IQLLSFEVVSTLTILAPLMVV), 188-208 (GGFLDWLVFKQPLAFVLFLIA), 238-258 (LKWGMFFLAEYAHLFAFSFVI), 269-291 (WGFIPGGIAILIKAGFFVFLSMW), and 309-329 (WKIMLPLALLNIVLTGIIILI).

It belongs to the complex I subunit 1 family. NDH-1 is composed of 14 different subunits. Subunits NuoA, H, J, K, L, M, N constitute the membrane sector of the complex.

It is found in the cell inner membrane. It carries out the reaction a quinone + NADH + 5 H(+)(in) = a quinol + NAD(+) + 4 H(+)(out). NDH-1 shuttles electrons from NADH, via FMN and iron-sulfur (Fe-S) centers, to quinones in the respiratory chain. The immediate electron acceptor for the enzyme in this species is believed to be ubiquinone. Couples the redox reaction to proton translocation (for every two electrons transferred, four hydrogen ions are translocated across the cytoplasmic membrane), and thus conserves the redox energy in a proton gradient. This subunit may bind ubiquinone. This Helicobacter pylori (strain ATCC 700392 / 26695) (Campylobacter pylori) protein is NADH-quinone oxidoreductase subunit H.